The primary structure comprises 263 residues: Pro-opiomelanocortin (263 aa).

The N-terminal stretch at 1-25 (MLHPVWGCVVAVMGVLWFYSSGVQS) is a signal peptide. Gln26 is subject to Pyrrolidone carboxylic acid. Cystine bridges form between Cys27-Cys49 and Cys33-Cys45. The segment at 114 to 142 (SQPRDEVERESEEEEGLQQHRRDDKRSYS) is disordered. Positions 130–142 (LQQHRRDDKRSYS) are enriched in basic and acidic residues. At Val152 the chain carries Valine amide.

Belongs to the POMC family. In terms of processing, specific enzymatic cleavages at paired basic residues yield the different active peptides.

It is found in the secreted. In terms of biological role, stimulates the adrenal glands to release cortisol. Its function is as follows. Anorexigenic peptide. Increases the pigmentation of skin by increasing melanin production in melanocytes. Functionally, increases the pigmentation of skin by increasing melanin production in melanocytes. Endogenous orexigenic opiate. In terms of biological role, endogenous opiate. This Acipenser transmontanus (White sturgeon) protein is Pro-opiomelanocortin (pomc).